Consider the following 404-residue polypeptide: 4-hydroxy-3-methylbut-2-en-1-yl diphosphate synthase (flavodoxin) (404 aa).

Positions 310, 313, 345, and 352 each coordinate [4Fe-4S] cluster.

Belongs to the IspG family. [4Fe-4S] cluster serves as cofactor.

It carries out the reaction (2E)-4-hydroxy-3-methylbut-2-enyl diphosphate + oxidized [flavodoxin] + H2O + 2 H(+) = 2-C-methyl-D-erythritol 2,4-cyclic diphosphate + reduced [flavodoxin]. Its pathway is isoprenoid biosynthesis; isopentenyl diphosphate biosynthesis via DXP pathway; isopentenyl diphosphate from 1-deoxy-D-xylulose 5-phosphate: step 5/6. Functionally, converts 2C-methyl-D-erythritol 2,4-cyclodiphosphate (ME-2,4cPP) into 1-hydroxy-2-methyl-2-(E)-butenyl 4-diphosphate. The sequence is that of 4-hydroxy-3-methylbut-2-en-1-yl diphosphate synthase (flavodoxin) from Treponema pallidum (strain Nichols).